The chain runs to 212 residues: Dephospho-CoA kinase (212 aa).

One can recognise a DPCK domain in the interval Ile3 to Gly204. Residue Gly11–Thr16 coordinates ATP.

This sequence belongs to the CoaE family.

The protein localises to the cytoplasm. The enzyme catalyses 3'-dephospho-CoA + ATP = ADP + CoA + H(+). Its pathway is cofactor biosynthesis; coenzyme A biosynthesis; CoA from (R)-pantothenate: step 5/5. In terms of biological role, catalyzes the phosphorylation of the 3'-hydroxyl group of dephosphocoenzyme A to form coenzyme A. The chain is Dephospho-CoA kinase from Paramagnetospirillum magneticum (strain ATCC 700264 / AMB-1) (Magnetospirillum magneticum).